The sequence spans 208 residues: Guanylate kinase (208 aa).

One can recognise a Guanylate kinase-like domain in the interval 4 to 185 (GNLYIISAPS…ALVDLEHILR (182 aa)). 11 to 18 (APSGAGKS) contributes to the ATP binding site.

It belongs to the guanylate kinase family.

Its subcellular location is the cytoplasm. The enzyme catalyses GMP + ATP = GDP + ADP. In terms of biological role, essential for recycling GMP and indirectly, cGMP. In Histophilus somni (strain 129Pt) (Haemophilus somnus), this protein is Guanylate kinase.